Consider the following 88-residue polypeptide: UPF0297 protein SSU98_0066 (88 aa).

The protein belongs to the UPF0297 family.

This chain is UPF0297 protein SSU98_0066, found in Streptococcus suis (strain 98HAH33).